The following is a 131-amino-acid chain: Small ribosomal subunit protein bS18 (131 aa).

Residues 1–10 (MSNGTDSKTA) are compositionally biased toward polar residues. The disordered stretch occupies residues 1–60 (MSNGTDSKTASAPPARSGGGFGGGGSRGGDRGDRGDRGGDRGDRGGGLGGDDDKRGGGRG). Over residues 17–27 (SGGGFGGGGSR) the composition is skewed to gly residues. Residues 28–44 (GGDRGDRGDRGGDRGDR) are compositionally biased toward basic and acidic residues.

The protein belongs to the bacterial ribosomal protein bS18 family. In terms of assembly, part of the 30S ribosomal subunit. Forms a tight heterodimer with protein bS6.

Functionally, binds as a heterodimer with protein bS6 to the central domain of the 16S rRNA, where it helps stabilize the platform of the 30S subunit. The chain is Small ribosomal subunit protein bS18 from Myxococcus xanthus (strain DK1622).